The following is a 551-amino-acid chain: Lysine--tRNA ligase (551 aa).

Residues 54–62 (PSGLPHIGT) carry the 'HIGH' region motif. Residues 303–307 (KISKS) carry the 'KMSKS' region motif. Lysine 306 provides a ligand contact to ATP.

This sequence belongs to the class-I aminoacyl-tRNA synthetase family.

It is found in the cytoplasm. It carries out the reaction tRNA(Lys) + L-lysine + ATP = L-lysyl-tRNA(Lys) + AMP + diphosphate. This Brucella melitensis biotype 1 (strain ATCC 23456 / CCUG 17765 / NCTC 10094 / 16M) protein is Lysine--tRNA ligase.